The sequence spans 441 residues: Proline--tRNA ligase (441 aa).

This sequence belongs to the class-II aminoacyl-tRNA synthetase family. ProS type 2 subfamily. In terms of assembly, homodimer.

The protein resides in the cytoplasm. The catalysed reaction is tRNA(Pro) + L-proline + ATP = L-prolyl-tRNA(Pro) + AMP + diphosphate. Its function is as follows. Catalyzes the attachment of proline to tRNA(Pro) in a two-step reaction: proline is first activated by ATP to form Pro-AMP and then transferred to the acceptor end of tRNA(Pro). In Bartonella tribocorum (strain CIP 105476 / IBS 506), this protein is Proline--tRNA ligase.